We begin with the raw amino-acid sequence, 352 residues long: Phenylalanine--tRNA ligase alpha subunit (352 aa).

E258 serves as a coordination point for Mg(2+).

Belongs to the class-II aminoacyl-tRNA synthetase family. Phe-tRNA synthetase alpha subunit type 1 subfamily. As to quaternary structure, tetramer of two alpha and two beta subunits. Mg(2+) serves as cofactor.

The protein localises to the cytoplasm. The catalysed reaction is tRNA(Phe) + L-phenylalanine + ATP = L-phenylalanyl-tRNA(Phe) + AMP + diphosphate + H(+). The protein is Phenylalanine--tRNA ligase alpha subunit of Staphylococcus epidermidis (strain ATCC 35984 / DSM 28319 / BCRC 17069 / CCUG 31568 / BM 3577 / RP62A).